Here is a 925-residue protein sequence, read N- to C-terminus: Glutamate receptor 3.1 (925 aa).

The N-terminal stretch at 1 to 25 (MLSSMNWVLLSFIIVLGGGLLLSEG) is a signal peptide. The Extracellular segment spans residues 26-591 (ASSSRPPVIK…NPWAFLRPFT (566 aa)). 6 N-linked (GlcNAc...) asparagine glycosylation sites follow: N309, N341, N359, N419, N437, and N488. A helical transmembrane segment spans residues 592–612 (LPMWAVTASFFVIVGAAIWIL). The Cytoplasmic segment spans residues 613-621 (EHRINDEFR). Residues 622-642 (GPPRRQIITILWFTFSTMFFS) traverse the membrane as a helical segment. At 643-653 (HRETTVSTLGR) the chain is on the cytoplasmic side. A helical membrane pass occupies residues 654-674 (MVLLIWLFVVLIITSSYTASL). At 675–831 (TSILTVQQLN…GDSEQLNVHS (157 aa)) the chain is on the extracellular side. N738 and N812 each carry an N-linked (GlcNAc...) asparagine glycan. The chain crosses the membrane as a helical span at residues 832 to 852 (FWGMFLVVGIACLVALFIHFF). Residues 853 to 925 (KIIRDFCKDT…ISRTASRRPI (73 aa)) are Cytoplasmic-facing. Residues 897–925 (KRRLKRKRNNDHSMNANSIISRTASRRPI) are disordered. Residues 908–919 (HSMNANSIISRT) are compositionally biased toward polar residues.

The protein belongs to the glutamate-gated ion channel (TC 1.A.10.1) family. In terms of assembly, may form heteromers. As to expression, expressed predominantly in roots. Firt detected in the vascular tissues of the cotyledons, and later in the vasculature of all organs. In leaves, preferentially expressed in guard cells.

The protein resides in the membrane. In terms of biological role, glutamate-gated receptor that probably acts as a non-selective cation channel. May be involved in light-signal transduction and calcium homeostasis via the regulation of calcium influx into cells. Required for the long-term calcium oscillation-regulated stomatal movements. The sequence is that of Glutamate receptor 3.1 (GLR3.1) from Arabidopsis thaliana (Mouse-ear cress).